The primary structure comprises 160 residues: Probable cyclic pyranopterin monophosphate synthase (160 aa).

Over residues 1-12 (MSDDSELTHVTD) the composition is skewed to basic and acidic residues. A disordered region spans residues 1–24 (MSDDSELTHVTDDGDAQMVDVGEK). Substrate contacts are provided by residues 78-80 (MCH) and 114-115 (ME). Aspartate 129 is an active-site residue.

It belongs to the MoaC family. Homohexamer; trimer of dimers.

It catalyses the reaction (8S)-3',8-cyclo-7,8-dihydroguanosine 5'-triphosphate = cyclic pyranopterin phosphate + diphosphate. It participates in cofactor biosynthesis; molybdopterin biosynthesis. Functionally, catalyzes the conversion of (8S)-3',8-cyclo-7,8-dihydroguanosine 5'-triphosphate to cyclic pyranopterin monophosphate (cPMP). The sequence is that of Probable cyclic pyranopterin monophosphate synthase from Natronomonas pharaonis (strain ATCC 35678 / DSM 2160 / CIP 103997 / JCM 8858 / NBRC 14720 / NCIMB 2260 / Gabara) (Halobacterium pharaonis).